Consider the following 321-residue polypeptide: Lipoyl synthase (321 aa).

Residues cysteine 68, cysteine 73, cysteine 79, cysteine 94, cysteine 98, cysteine 101, and serine 308 each contribute to the [4Fe-4S] cluster site. The Radical SAM core domain maps to 80–297 (FNHGTATFMI…KDYAEEIGFT (218 aa)).

It belongs to the radical SAM superfamily. Lipoyl synthase family. [4Fe-4S] cluster is required as a cofactor.

It is found in the cytoplasm. It catalyses the reaction [[Fe-S] cluster scaffold protein carrying a second [4Fe-4S](2+) cluster] + N(6)-octanoyl-L-lysyl-[protein] + 2 oxidized [2Fe-2S]-[ferredoxin] + 2 S-adenosyl-L-methionine + 4 H(+) = [[Fe-S] cluster scaffold protein] + N(6)-[(R)-dihydrolipoyl]-L-lysyl-[protein] + 4 Fe(3+) + 2 hydrogen sulfide + 2 5'-deoxyadenosine + 2 L-methionine + 2 reduced [2Fe-2S]-[ferredoxin]. It functions in the pathway protein modification; protein lipoylation via endogenous pathway; protein N(6)-(lipoyl)lysine from octanoyl-[acyl-carrier-protein]: step 2/2. Functionally, catalyzes the radical-mediated insertion of two sulfur atoms into the C-6 and C-8 positions of the octanoyl moiety bound to the lipoyl domains of lipoate-dependent enzymes, thereby converting the octanoylated domains into lipoylated derivatives. This chain is Lipoyl synthase, found in Shewanella loihica (strain ATCC BAA-1088 / PV-4).